Here is a 253-residue protein sequence, read N- to C-terminus: RAD51-associated protein 1 (253 aa).

The tract at residues 32–51 is interaction with DNA; sequence APLTKKSRTQPKEPKKENKK. Disordered stretches follow at residues 33–74, 141–169, and 184–244; these read PLTK…TSLD, DREH…EGND, and KKIK…WVPP. The segment covering 154–169 has biased composition (acidic residues); sequence PDEESEEDSDYREGND. Residues 184–195 are compositionally biased toward basic residues; it reads KKIKRQTRKEKK. Residues 190 to 241 are interaction with DNA; it reads TRKEKKTPKSENNTTVMELKSEQTQKMMSTSSEPVGRPLYTSSPVTNKKPKW. Residues 199-222 show a composition bias toward polar residues; the sequence is SENNTTVMELKSEQTQKMMSTSSE.

In terms of assembly, monomer.

The protein localises to the chromosome. It localises to the nucleus. In terms of biological role, structure-specific DNA-binding protein involved in DNA repair by promoting RAD51-mediated homologous recombination. Acts by stimulating D-Loop formation by RAD51: specifically enhances joint molecule formation through its structure-specific DNA interaction and its interaction with RAD51. Binds single-stranded DNA (ssDNA), double-stranded DNA (dsDNA) and secondary DNA structures, such as D-loop structures: has a strong preference for branched-DNA structures that are obligatory intermediates during joint molecule formation. Involved in mitotic recombination-dependent replication fork processing. Also involved in meiosis by promoting DMC1-mediated homologous meiotic recombination. In Gallus gallus (Chicken), this protein is RAD51-associated protein 1.